Here is a 321-residue protein sequence, read N- to C-terminus: Ribosomal RNA small subunit methyltransferase H (321 aa).

S-adenosyl-L-methionine-binding positions include 40-42 (GGH), aspartate 60, phenylalanine 84, aspartate 106, and glutamine 113.

It belongs to the methyltransferase superfamily. RsmH family.

It is found in the cytoplasm. The enzyme catalyses cytidine(1402) in 16S rRNA + S-adenosyl-L-methionine = N(4)-methylcytidine(1402) in 16S rRNA + S-adenosyl-L-homocysteine + H(+). Its function is as follows. Specifically methylates the N4 position of cytidine in position 1402 (C1402) of 16S rRNA. The polypeptide is Ribosomal RNA small subunit methyltransferase H (Pasteurella multocida (strain Pm70)).